The following is a 117-amino-acid chain: Large ribosomal subunit protein uL18 (117 aa).

It belongs to the universal ribosomal protein uL18 family. As to quaternary structure, part of the 50S ribosomal subunit; part of the 5S rRNA/L5/L18/L25 subcomplex. Contacts the 5S and 23S rRNAs.

Its function is as follows. This is one of the proteins that bind and probably mediate the attachment of the 5S RNA into the large ribosomal subunit, where it forms part of the central protuberance. This Vibrio atlanticus (strain LGP32) (Vibrio splendidus (strain Mel32)) protein is Large ribosomal subunit protein uL18.